A 432-amino-acid polypeptide reads, in one-letter code: Phosphomethylpyrimidine synthase (432 aa).

Residues Asn66, Met95, Tyr124, His163, 185–187 (SRG), 226–229 (DGLR), and Glu265 each bind substrate. His269 contributes to the Zn(2+) binding site. Tyr292 contacts substrate. His333 provides a ligand contact to Zn(2+). [4Fe-4S] cluster contacts are provided by Cys409, Cys412, and Cys416.

The protein belongs to the ThiC family. The cofactor is [4Fe-4S] cluster.

It carries out the reaction 5-amino-1-(5-phospho-beta-D-ribosyl)imidazole + S-adenosyl-L-methionine = 4-amino-2-methyl-5-(phosphooxymethyl)pyrimidine + CO + 5'-deoxyadenosine + formate + L-methionine + 3 H(+). The protein operates within cofactor biosynthesis; thiamine diphosphate biosynthesis. In terms of biological role, catalyzes the synthesis of the hydroxymethylpyrimidine phosphate (HMP-P) moiety of thiamine from aminoimidazole ribotide (AIR) in a radical S-adenosyl-L-methionine (SAM)-dependent reaction. The sequence is that of Phosphomethylpyrimidine synthase from Thermoanaerobacter pseudethanolicus (strain ATCC 33223 / 39E) (Clostridium thermohydrosulfuricum).